Consider the following 565-residue polypeptide: Tyrosine-protein phosphatase non-receptor type 5 (565 aa).

Basic and acidic residues predominate over residues 1–16 (MNYEGARSERENHAAD). The tract at residues 1-80 (MNYEGARSER…KPPPRGAGSH (80 aa)) is disordered. A compositionally biased stretch (pro residues) spans 56 to 75 (MPPPPPPSPPSDPAQKPPPR). Transmembrane regions (helical) follow at residues 88–108 (LCLF…FSGY) and 146–166 (LLLV…WHLL). A disordered region spans residues 169 to 189 (PPEPPTPLPPEDRRQSVSRQP). The residue at position 245 (serine 245) is a Phosphoserine; by PKA. Threonine 255 is modified (phosphothreonine; by MAPK). Residue serine 268 is modified to Phosphoserine; by MAPK. The Tyrosine-protein phosphatase domain occupies 300 to 555 (LQAEFFEIPM…QFVHHVMSLY (256 aa)). Substrate contacts are provided by residues aspartate 461, 496–502 (CSAGIGR), and glutamine 540. The Phosphocysteine intermediate role is filled by cysteine 496.

This sequence belongs to the protein-tyrosine phosphatase family. Non-receptor class subfamily. Post-translationally, phosphorylation at Ser-245 by PKA deactivates PTPN5. Phosphorylation at Thr-255 and Ser-268 by MAPKs stabilizes the phosphatase, dephosphorylation of these sites results in ubiquitin-mediated degradation of the active phosphatase.

It is found in the endoplasmic reticulum membrane. It catalyses the reaction O-phospho-L-tyrosyl-[protein] + H2O = L-tyrosyl-[protein] + phosphate. Functionally, may regulate the activity of several effector molecules involved in synaptic plasticity and neuronal cell survival, including MAPKs, Src family kinases and NMDA receptors. This chain is Tyrosine-protein phosphatase non-receptor type 5 (PTPN5), found in Homo sapiens (Human).